Consider the following 290-residue polypeptide: Shikimate dehydrogenase (NADP(+)) (290 aa).

Shikimate-binding positions include 19–21 (SLS) and Ser-65. The active-site Proton acceptor is the Lys-69. Shikimate-binding residues include Asn-90 and Asp-105. NADP(+) contacts are provided by residues 129-133 (GAGGA) and Leu-231. Tyr-233 is a binding site for shikimate. Gly-254 serves as a coordination point for NADP(+).

This sequence belongs to the shikimate dehydrogenase family. As to quaternary structure, homodimer.

The catalysed reaction is shikimate + NADP(+) = 3-dehydroshikimate + NADPH + H(+). The protein operates within metabolic intermediate biosynthesis; chorismate biosynthesis; chorismate from D-erythrose 4-phosphate and phosphoenolpyruvate: step 4/7. Involved in the biosynthesis of the chorismate, which leads to the biosynthesis of aromatic amino acids. Catalyzes the reversible NADPH linked reduction of 3-dehydroshikimate (DHSA) to yield shikimate (SA). This chain is Shikimate dehydrogenase (NADP(+)), found in Latilactobacillus sakei subsp. sakei (strain 23K) (Lactobacillus sakei subsp. sakei).